The chain runs to 608 residues: Cilia- and flagella-associated protein 100 (608 aa).

A compositionally biased stretch (polar residues) spans 1-17 (MSETLSNIVSKNMTNDK). A disordered region spans residues 1–57 (MSETLSNIVSKNMTNDKNSLESMNISSSSSAEENPKKQAKKXKERGPDPSANPFHLS). Residues 20–32 (LESMNISSSSSAE) are compositionally biased toward low complexity. Coiled coils occupy residues 164–196 (TLDCKRREIQRLETLATKEEARLQQAEKSLAKD) and 230–257 (LEIRDLTTQIVNIKSEISRFEDTLQHYK). Disordered regions lie at residues 291–320 (ASKDGSVNSTPGDKGPGIKGKASSVWAKEG) and 339–377 (LSSPQQGSQPSESSGGNSRGSNSPIPLTQEDTDSDGEEP). Low complexity predominate over residues 339-361 (LSSPQQGSQPSESSGGNSRGSNS). 2 coiled-coil regions span residues 385–435 (QQLL…QLKQ) and 500–575 (TVQM…RGRT).

It belongs to the CFAP100 family.

Its subcellular location is the cytoplasm. It localises to the cytoskeleton. The protein resides in the cilium axoneme. May play a role in ciliary/flagellar motility by regulating the assembly and the activity of axonemal inner dynein arm. The chain is Cilia- and flagella-associated protein 100 from Macaca fascicularis (Crab-eating macaque).